Reading from the N-terminus, the 681-residue chain is Chaperone protein HtpG (681 aa).

The interval methionine 1–arginine 326 is a; substrate-binding. Residues serine 327–asparagine 545 form a b region. Positions isoleucine 546 to isoleucine 681 are c. Positions aspartate 601–lysine 620 are disordered.

Belongs to the heat shock protein 90 family. As to quaternary structure, homodimer.

It is found in the cytoplasm. Its function is as follows. Molecular chaperone. Has ATPase activity. In Bacteroides fragilis (strain ATCC 25285 / DSM 2151 / CCUG 4856 / JCM 11019 / LMG 10263 / NCTC 9343 / Onslow / VPI 2553 / EN-2), this protein is Chaperone protein HtpG.